We begin with the raw amino-acid sequence, 386 residues long: Succinate--CoA ligase [ADP-forming] subunit beta (386 aa).

ATP-binding positions include lysine 46, 53–55 (GRG), glutamate 99, alanine 102, and glutamate 107. Mg(2+) is bound by residues asparagine 199 and aspartate 213. Substrate is bound by residues asparagine 264 and 321–323 (GIV).

The protein belongs to the succinate/malate CoA ligase beta subunit family. Heterotetramer of two alpha and two beta subunits. Mg(2+) serves as cofactor.

It catalyses the reaction succinate + ATP + CoA = succinyl-CoA + ADP + phosphate. The catalysed reaction is GTP + succinate + CoA = succinyl-CoA + GDP + phosphate. It participates in carbohydrate metabolism; tricarboxylic acid cycle; succinate from succinyl-CoA (ligase route): step 1/1. Succinyl-CoA synthetase functions in the citric acid cycle (TCA), coupling the hydrolysis of succinyl-CoA to the synthesis of either ATP or GTP and thus represents the only step of substrate-level phosphorylation in the TCA. The beta subunit provides nucleotide specificity of the enzyme and binds the substrate succinate, while the binding sites for coenzyme A and phosphate are found in the alpha subunit. In Actinobacillus succinogenes (strain ATCC 55618 / DSM 22257 / CCUG 43843 / 130Z), this protein is Succinate--CoA ligase [ADP-forming] subunit beta.